We begin with the raw amino-acid sequence, 60 residues long: Large ribosomal subunit protein bL32 (60 aa).

Positions 1–16 (MAVPRRKTSPSRRGMR) are enriched in basic residues. Residues 1-60 (MAVPRRKTSPSRRGMRRSADAIKRPTYVEDKDSGELRRPHHLDLKTGMYKGRQVLKKKDS) form a disordered region. Over residues 17–44 (RSADAIKRPTYVEDKDSGELRRPHHLDL) the composition is skewed to basic and acidic residues.

This Rhodopseudomonas palustris (strain ATCC BAA-98 / CGA009) protein is Large ribosomal subunit protein bL32.